Reading from the N-terminus, the 497-residue chain is uncharacterized protein (497 aa).

Basic and acidic residues predominate over residues 44–74 (IRQEKEMKRHDDDGRQYQSDRKFAKSKHDDI). Disordered stretches follow at residues 44–95 (IRQE…SVGR), 120–151 (VSRSSSIGHSGSTAPWSSVGRHNRKKDNEHRD), and 195–227 (GNVITPGVTSTTGAPSGKASLSRAASNSSTSAR). Residues 120 to 131 (VSRSSSIGHSGS) show a composition bias toward low complexity. A phosphoserine mark is found at Ser-123, Ser-125, and Ser-131. Thr-132 is modified (phosphothreonine). The segment covering 213–227 (ASLSRAASNSSTSAR) has biased composition (low complexity). The residue at position 258 (Thr-258) is a Phosphothreonine. Ser-310 is modified (phosphoserine). The span at 367–385 (NVNPSNQDLASVKQPSGFS) shows a compositional bias: polar residues. The tract at residues 367–497 (NVNPSNQDLA…GFPDTSRPPH (131 aa)) is disordered. Positions 400-409 (NFSNDDSSFF) are enriched in low complexity. Position 436 is a phosphoserine (Ser-436). Low complexity predominate over residues 448–472 (GLSSGASIPSAPPGFGYQQPSFPYS).

The protein localises to the cytoplasm. Its subcellular location is the nucleus. This is an uncharacterized protein from Schizosaccharomyces pombe (strain 972 / ATCC 24843) (Fission yeast).